The following is an 83-amino-acid chain: UPF0297 protein LEUM_0557 (83 aa).

It belongs to the UPF0297 family.

The chain is UPF0297 protein LEUM_0557 from Leuconostoc mesenteroides subsp. mesenteroides (strain ATCC 8293 / DSM 20343 / BCRC 11652 / CCM 1803 / JCM 6124 / NCDO 523 / NBRC 100496 / NCIMB 8023 / NCTC 12954 / NRRL B-1118 / 37Y).